Here is a 341-residue protein sequence, read N- to C-terminus: Phenylalanine--tRNA ligase alpha subunit (341 aa).

E254 is a Mg(2+) binding site.

Belongs to the class-II aminoacyl-tRNA synthetase family. Phe-tRNA synthetase alpha subunit type 1 subfamily. In terms of assembly, tetramer of two alpha and two beta subunits. Mg(2+) serves as cofactor.

The protein resides in the cytoplasm. It carries out the reaction tRNA(Phe) + L-phenylalanine + ATP = L-phenylalanyl-tRNA(Phe) + AMP + diphosphate + H(+). The chain is Phenylalanine--tRNA ligase alpha subunit from Chlorobaculum parvum (strain DSM 263 / NCIMB 8327) (Chlorobium vibrioforme subsp. thiosulfatophilum).